The following is a 118-amino-acid chain: cAMP-responsive element-binding protein-like 2 (118 aa).

Residues 1-25 (MDDSKVSGGKVKKPGKRGRKPAKID) are disordered. The span at 10–21 (KVKKPGKRGRKP) shows a compositional bias: basic residues. Positions 23 to 86 (KIDLKAKLER…AAMDQGKIPS (64 aa)) constitute a bZIP domain. The basic motif stretch occupies residues 29–60 (KLERSRQSARECRARKKLRYQYLEELVSSRER). Positions 62–69 (ICALREEL) are leucine-zipper.

This sequence belongs to the bZIP family. ATF subfamily.

It is found in the nucleus. Functionally, probable regulator of creb1 transcriptional activity which is involved in adipose cells differentiation. May also play a regulatory role in the cell cycle. This is cAMP-responsive element-binding protein-like 2 (crebl2) from Xenopus tropicalis (Western clawed frog).